Here is a 144-residue protein sequence, read N- to C-terminus: Endoribonuclease YbeY (144 aa).

Zn(2+) contacts are provided by His-105, His-109, and Asp-115.

This sequence belongs to the endoribonuclease YbeY family. Requires Zn(2+) as cofactor.

It is found in the cytoplasm. In terms of biological role, single strand-specific metallo-endoribonuclease involved in late-stage 70S ribosome quality control and in maturation of the 3' terminus of the 16S rRNA. The sequence is that of Endoribonuclease YbeY from Chlorobium limicola (strain DSM 245 / NBRC 103803 / 6330).